A 147-amino-acid chain; its full sequence is 3-hydroxyacyl-[acyl-carrier-protein] dehydratase FabZ (147 aa).

Residue histidine 48 is part of the active site.

This sequence belongs to the thioester dehydratase family. FabZ subfamily.

The protein resides in the cytoplasm. It catalyses the reaction a (3R)-hydroxyacyl-[ACP] = a (2E)-enoyl-[ACP] + H2O. Involved in unsaturated fatty acids biosynthesis. Catalyzes the dehydration of short chain beta-hydroxyacyl-ACPs and long chain saturated and unsaturated beta-hydroxyacyl-ACPs. This Aliarcobacter butzleri (strain RM4018) (Arcobacter butzleri) protein is 3-hydroxyacyl-[acyl-carrier-protein] dehydratase FabZ.